A 247-amino-acid chain; its full sequence is DNA polymerase sliding clamp (247 aa).

This sequence belongs to the PCNA family. In terms of assembly, homotrimer. The subunits circularize to form a toroid; DNA passes through its center. Replication factor C (RFC) is required to load the toroid on the DNA.

Sliding clamp subunit that acts as a moving platform for DNA processing. Responsible for tethering the catalytic subunit of DNA polymerase and other proteins to DNA during high-speed replication. This Methanoregula boonei (strain DSM 21154 / JCM 14090 / 6A8) protein is DNA polymerase sliding clamp.